The chain runs to 172 residues: Myosin regulatory light chain RLC-A (172 aa).

Basic residues predominate over residues 1–16 (MSSKRAKTKTTKKRPQ). A disordered region spans residues 1–20 (MSSKRAKTKTTKKRPQRATS). Phosphothreonine; by MLCK is present on T19. Position 20 is a phosphoserine; by MLCK (S20). 3 consecutive EF-hand domains span residues 29-64 (SQIQ…MGKN), 98-133 (DPED…MGDR), and 134-169 (FTDE…GAKD). Ca(2+) is bound by residues D42, N44, D46, and D53.

As to quaternary structure, myosin is a hexamer of 2 heavy chains and 4 light chains. Phosphorylation increases the actin-activated myosin ATPase activity and thereby regulates the contractile activity.

Myosin regulatory subunit that plays an important role in regulation of both smooth muscle and nonmuscle cell contractile activity via its phosphorylation. Implicated in cytokinesis, receptor capping, and cell locomotion. The chain is Myosin regulatory light chain RLC-A (Rlc-a) from Rattus norvegicus (Rat).